The chain runs to 52 residues: Ornatin-B (52 aa).

Positions 42–44 (RGD) match the Cell attachment site motif.

It belongs to the ornatin family.

The protein localises to the secreted. Functionally, potent inhibitor of fibrinogen interaction with platelet receptors expressed on glycoprotein IIb-IIIa complex. May prevent blood from clotting during either feeding and/or storage of ingested blood. This is Ornatin-B from Placobdella ornata (Turtle leech).